The sequence spans 337 residues: GTPase Obg (337 aa).

One can recognise an Obg domain in the interval 1 to 161 (MNLTDNAVIF…FKIKLDFVFL (161 aa)). Residues 162–333 (ADVGLFGYSN…LINKILLFLE (172 aa)) enclose the OBG-type G domain. GTP contacts are provided by residues 168-175 (GYSNTGRS), 193-197 (FTTLF), 214-217 (DIPS), 282-285 (NKTD), and 314-316 (SLN). The Mg(2+) site is built by Ser175 and Thr195.

It belongs to the TRAFAC class OBG-HflX-like GTPase superfamily. OBG GTPase family. As to quaternary structure, monomer. Requires Mg(2+) as cofactor.

The protein localises to the cytoplasm. In terms of biological role, an essential GTPase which binds GTP, GDP and possibly (p)ppGpp with moderate affinity, with high nucleotide exchange rates and a fairly low GTP hydrolysis rate. Plays a role in control of the cell cycle, stress response, ribosome biogenesis and in those bacteria that undergo differentiation, in morphogenesis control. The chain is GTPase Obg from Wigglesworthia glossinidia brevipalpis.